A 515-amino-acid chain; its full sequence is ATP synthase subunit alpha (515 aa).

ATP is bound at residue 171–178 (GDRQTGKT).

It belongs to the ATPase alpha/beta chains family. In terms of assembly, F-type ATPases have 2 components, CF(1) - the catalytic core - and CF(0) - the membrane proton channel. CF(1) has five subunits: alpha(3), beta(3), gamma(1), delta(1), epsilon(1). CF(0) has three main subunits: a(1), b(2) and c(9-12). The alpha and beta chains form an alternating ring which encloses part of the gamma chain. CF(1) is attached to CF(0) by a central stalk formed by the gamma and epsilon chains, while a peripheral stalk is formed by the delta and b chains.

The protein localises to the cell inner membrane. The enzyme catalyses ATP + H2O + 4 H(+)(in) = ADP + phosphate + 5 H(+)(out). In terms of biological role, produces ATP from ADP in the presence of a proton gradient across the membrane. The alpha chain is a regulatory subunit. The sequence is that of ATP synthase subunit alpha from Coxiella burnetii (strain CbuK_Q154) (Coxiella burnetii (strain Q154)).